Reading from the N-terminus, the 347-residue chain is GMP reductase (347 aa).

108–131 (ADFEKTKQILDLNPALNFVCIDVA) is a binding site for NADP(+). K(+)-binding residues include Gly181 and Gly183. The active-site Thioimidate intermediate is Cys186. Residue 216 to 239 (IVSDGGCTTPGDVAKAFGGGADFV) participates in NADP(+) binding.

This sequence belongs to the IMPDH/GMPR family. GuaC type 1 subfamily. Homotetramer.

The catalysed reaction is IMP + NH4(+) + NADP(+) = GMP + NADPH + 2 H(+). In terms of biological role, catalyzes the irreversible NADPH-dependent deamination of GMP to IMP. It functions in the conversion of nucleobase, nucleoside and nucleotide derivatives of G to A nucleotides, and in maintaining the intracellular balance of A and G nucleotides. The polypeptide is GMP reductase (Escherichia coli O139:H28 (strain E24377A / ETEC)).